The chain runs to 755 residues: MKVLIVESEFLHQDTWVGNAVERLADALSQQNVTVIKSTSFDDGFAILSSNEAIDCLMFSYQMEHPDEHQNVRQLIGKLHERQQNVPVFLLGDREKALAAMDRDLLELVDEFAWILEDTADFIAGRAVAAMTRYRQQLLPPLFSALMKYSDIHEYSWAAPGHQGGVGFTKTPAGRFYHDYYGENLFRTDMGIERTSLGSLLDHTGAFGESEKYAARVFGADRSWSVVVGTSGSNRTIMQACMTDNDVVVVDRNCHKSIEQGLMLTGAKPVYMVPSRNRYGIIGPIYPQEMQPETLQKKISESPLTKDKAGQKPSYCVVTNCTYDGVCYNAKEAQDLLEKTSDRLHFDEAWYGYARFNPIYADHYAMRGEPGDHNGPTVFATHSTHKLLNALSQASYIHVREGRGAINFSRFNQAYMMHATTSPLYAICASNDVAVSMMDGNSGLSLTQEVIDEAVDFRQAMARLYKEFTADGSWFFKPWNKEVVTDPQTGKTYDFADAPTKLLTTVQDCWVMHPGESWHGFKDIPDNWSMLDPIKVSILAPGMGEDGELEETGVPAALVTAWLGRHGIVPTRTTDFQIMFLFSMGVTRGKWGTLVNTLCSFKRHYDANTPLAQVMPELVEQYPDTYANMGIHDLGDTMFAWLKENNPGARLNEAYSGLPVAEVTPREAYNAIVDNNVELVSIENLPGRIAANSVIPYPPGIPMLLSGENFGDKNSPQVSYLRSLQSWDHHFPGFEHETEGTEIIDGIYHVMCVKA.

An N6-(pyridoxal phosphate)lysine modification is found at Lys-386.

The protein belongs to the Orn/Lys/Arg decarboxylase class-I family. As to quaternary structure, homodecamer. The basic unit is a homodimer, organized into a ring of giving a pentamer of five homodimers. Pyridoxal 5'-phosphate serves as cofactor.

It is found in the cytoplasm. The enzyme catalyses L-arginine + H(+) = agmatine + CO2. With respect to regulation, homodimers are probably inactive, their assembly into a homodecamer at low pH requires neutralization of negatively charged residues. This uses cytoplasmic protons, contributing pH regulation and stabilizes the homodecamer. In terms of biological role, component of the acid-resistance (AR) system allowing enteric pathogens to survive the acidic environment in the stomach. ADC can be found in two forms: biodegradative (this enzyme) and biosynthetic (speA). The biodegradative form plays a role in regulating pH by consuming proteins. Converts arginine imported by AdiC to agmatine which is then exported by AdiC. The sequence is that of Biodegradative arginine decarboxylase (adiA) from Escherichia coli (strain K12).